Here is a 352-residue protein sequence, read N- to C-terminus: Inhibin beta C chain (352 aa).

The N-terminal stretch at 1–18 (MTSSLLLAFLLLAPTTVA) is a signal peptide. Positions 19-236 (TPRAGGQCPA…VGGKHQIHRR (218 aa)) are excised as a propeptide. N-linked (GlcNAc...) asparagine glycosylation is found at Asn110, Asn143, and Asn161. 4 cysteine pairs are disulfide-bonded: Cys240–Cys248, Cys247–Cys317, Cys276–Cys349, and Cys280–Cys351.

This sequence belongs to the TGF-beta family. Homodimeric or heterodimeric through association with alpha and beta subunits, linked by one or more disulfide bonds. Inhibins are heterodimers of one alpha and one beta subunit. Activins are homo- or heterodimers of beta subunits only. As to expression, expressed in benign prostatic hyperplasia.

It localises to the secreted. Functionally, inhibins and activins inhibit and activate, respectively, the secretion of follitropin by the pituitary gland. Inhibins/activins are involved in regulating a number of diverse functions such as hypothalamic and pituitary hormone secretion, gonadal hormone secretion, germ cell development and maturation, erythroid differentiation, insulin secretion, nerve cell survival, embryonic axial development or bone growth, depending on their subunit composition. Inhibins appear to oppose the functions of activins. The protein is Inhibin beta C chain (INHBC) of Homo sapiens (Human).